Here is a 393-residue protein sequence, read N- to C-terminus: MQQTKKLTHSDITIAVMSGPFLQRGEPALVSKWYRTKMALACGVDLVVELPYAFSTQKAETFANGAISILNALHVSEICFGSEDGQIENFYNTISVQKNEEETFNRLVKQFMNAGNSYAKATSEAFLHILSSEKNIDMSQPNNILGFQYIKAILMQNSSMQAQTIKRFASHYHDETFNDQHIASATSIRKQLFSENSSFTEIESFIPKATASLLASYKQNYGTLHNWEQYFSFFKYKLMTMSPEDLRHIYEIEEGLEHRILSKIQTSSSFHSFMESLKTKRYTWTRLQRACTHILTNTTKEEIYCANIEQHAPYIRLLGMSQKGQTYLSKNKKKIELPILTHTKTFDHPTLHIERKANSVYFSIMKEPLRTQLLKRDATHHPIRYDETTAKFL.

Residues Gly81, Asn142, and Arg167 each coordinate ATP.

This sequence belongs to the TmcAL family.

Its subcellular location is the cytoplasm. The enzyme catalyses cytidine(34) in elongator tRNA(Met) + acetate + ATP = N(4)-acetylcytidine(34) in elongator tRNA(Met) + AMP + diphosphate. Functionally, catalyzes the formation of N(4)-acetylcytidine (ac(4)C) at the wobble position of elongator tRNA(Met), using acetate and ATP as substrates. First activates an acetate ion to form acetyladenylate (Ac-AMP) and then transfers the acetyl group to tRNA to form ac(4)C34. The polypeptide is tRNA(Met) cytidine acetate ligase (Bacillus thuringiensis subsp. konkukian (strain 97-27)).